Reading from the N-terminus, the 176-residue chain is Lipoprotein signal peptidase (176 aa).

The next 4 helical transmembrane spans lie at 26 to 46 (LWLA…IVIV), 57 to 77 (VTGF…SFLA), 82 to 102 (WQRW…VWLL), and 111 to 131 (FCFA…DRVI). Residues D137 and D155 contribute to the active site. The helical transmembrane segment at 147–167 (HWPAFNVADCAITVGAVLLIV) threads the bilayer.

The protein belongs to the peptidase A8 family.

It localises to the cell inner membrane. The catalysed reaction is Release of signal peptides from bacterial membrane prolipoproteins. Hydrolyzes -Xaa-Yaa-Zaa-|-(S,diacylglyceryl)Cys-, in which Xaa is hydrophobic (preferably Leu), and Yaa (Ala or Ser) and Zaa (Gly or Ala) have small, neutral side chains.. The protein operates within protein modification; lipoprotein biosynthesis (signal peptide cleavage). Functionally, this protein specifically catalyzes the removal of signal peptides from prolipoproteins. The sequence is that of Lipoprotein signal peptidase from Cupriavidus taiwanensis (strain DSM 17343 / BCRC 17206 / CCUG 44338 / CIP 107171 / LMG 19424 / R1) (Ralstonia taiwanensis (strain LMG 19424)).